Consider the following 242-residue polypeptide: Ribonuclease 3 (242 aa).

Positions 18–146 (APAIEAKLGY…IIGAIYLDGG (129 aa)) constitute an RNase III domain. Residue glutamate 59 coordinates Mg(2+). The active site involves aspartate 63. Mg(2+) contacts are provided by aspartate 132 and glutamate 135. Residue glutamate 135 is part of the active site. Residues 172 to 241 (NWKALLQDYC…AADALSRVEL (70 aa)) form the DRBM domain. Basic and acidic residues predominate over residues 218–227 (RGKGTSKKEA). Residues 218–242 (RGKGTSKKEAQQAAAADALSRVELP) form a disordered region.

This sequence belongs to the ribonuclease III family. As to quaternary structure, homodimer. Mg(2+) serves as cofactor.

It is found in the cytoplasm. The catalysed reaction is Endonucleolytic cleavage to 5'-phosphomonoester.. Digests double-stranded RNA. Involved in the processing of primary rRNA transcript to yield the immediate precursors to the large and small rRNAs (23S and 16S). Processes some mRNAs, and tRNAs when they are encoded in the rRNA operon. Processes pre-crRNA and tracrRNA of type II CRISPR loci if present in the organism. The protein is Ribonuclease 3 of Protochlamydia amoebophila (strain UWE25).